Reading from the N-terminus, the 555-residue chain is Formate--tetrahydrofolate ligase (555 aa).

An ATP-binding site is contributed by 65–72; the sequence is TPAGEGKS.

It belongs to the formate--tetrahydrofolate ligase family.

It carries out the reaction (6S)-5,6,7,8-tetrahydrofolate + formate + ATP = (6R)-10-formyltetrahydrofolate + ADP + phosphate. The protein operates within one-carbon metabolism; tetrahydrofolate interconversion. In Lactococcus lactis subsp. lactis (strain IL1403) (Streptococcus lactis), this protein is Formate--tetrahydrofolate ligase.